Consider the following 372-residue polypeptide: MHSVIHASDRIVVKVGSSLVTNDGRGLDLNALARWAEEVAELKRRGKQVVLVSSGAIAEGCQRLGWTVRPKGVHELQAAAAVGQMGLCQAYESAFRSFGLRTAQILLTHEDLADRTRYLNARSTLTSLLNLNVVPIINENDTVATSEIRFGDNDTLGALVTNLIEADALVILTDQRGLYSADPRKHPDAEFIHQAEAGDERLEDMAGGAGSSVGTGGMITKILAAKRAARSGAATVIASGREPHVLSRLADGEAIGTQLVAATNRMAARKQWLADHLKLAGRLLLDDGAALAIRERGTSLLPVGVSAVEGDFLRGEAVACVDAAGHEVARGLVNYSSDEARQIMRKSTREIEAALGYIVEPELIHRDNMVAL.

Lys14 lines the ATP pocket. Ser54, Asp141, and Asn153 together coordinate substrate. Residues Thr173–Asp174 and Thr215–Lys221 contribute to the ATP site. Residues Ala280–Ile358 form the PUA domain.

It belongs to the glutamate 5-kinase family.

The protein localises to the cytoplasm. It catalyses the reaction L-glutamate + ATP = L-glutamyl 5-phosphate + ADP. It functions in the pathway amino-acid biosynthesis; L-proline biosynthesis; L-glutamate 5-semialdehyde from L-glutamate: step 1/2. In terms of biological role, catalyzes the transfer of a phosphate group to glutamate to form L-glutamate 5-phosphate. The protein is Glutamate 5-kinase of Chromobacterium violaceum (strain ATCC 12472 / DSM 30191 / JCM 1249 / CCUG 213 / NBRC 12614 / NCIMB 9131 / NCTC 9757 / MK).